A 652-amino-acid polypeptide reads, in one-letter code: Acetyl-coenzyme A synthetase (652 aa).

CoA is bound by residues 191 to 194 (RAGR), T311, and N335. ATP contacts are provided by residues 387-389 (GEP), 411-416 (DTWWQT), D500, and R515. S523 is a CoA binding site. ATP is bound at residue R526. Mg(2+) is bound by residues V537, H539, and I542. R584 serves as a coordination point for CoA. K609 bears the N6-acetyllysine mark.

It belongs to the ATP-dependent AMP-binding enzyme family. Requires Mg(2+) as cofactor. Acetylated. Deacetylation by the SIR2-homolog deacetylase activates the enzyme.

It carries out the reaction acetate + ATP + CoA = acetyl-CoA + AMP + diphosphate. Catalyzes the conversion of acetate into acetyl-CoA (AcCoA), an essential intermediate at the junction of anabolic and catabolic pathways. Acs undergoes a two-step reaction. In the first half reaction, Acs combines acetate with ATP to form acetyl-adenylate (AcAMP) intermediate. In the second half reaction, it can then transfer the acetyl group from AcAMP to the sulfhydryl group of CoA, forming the product AcCoA. Its function is as follows. Enables the cell to use acetate during aerobic growth to generate energy via the TCA cycle, and biosynthetic compounds via the glyoxylate shunt. Acetylates CheY, the response regulator involved in flagellar movement and chemotaxis. The polypeptide is Acetyl-coenzyme A synthetase (Escherichia coli O6:H1 (strain CFT073 / ATCC 700928 / UPEC)).